The following is a 429-amino-acid chain: Enolase (429 aa).

Gln164 contacts (2R)-2-phosphoglycerate. Glu206 (proton donor) is an active-site residue. The Mg(2+) site is built by Asp243, Glu286, and Asp313. Positions 338, 367, 368, and 389 each coordinate (2R)-2-phosphoglycerate. The active-site Proton acceptor is the Lys338.

This sequence belongs to the enolase family. Mg(2+) is required as a cofactor.

Its subcellular location is the cytoplasm. It localises to the secreted. The protein resides in the cell surface. The enzyme catalyses (2R)-2-phosphoglycerate = phosphoenolpyruvate + H2O. The protein operates within carbohydrate degradation; glycolysis; pyruvate from D-glyceraldehyde 3-phosphate: step 4/5. In terms of biological role, catalyzes the reversible conversion of 2-phosphoglycerate (2-PG) into phosphoenolpyruvate (PEP). It is essential for the degradation of carbohydrates via glycolysis. The polypeptide is Enolase (Thermosipho africanus (strain TCF52B)).